The chain runs to 337 residues: Probable deoxyhypusine synthase (337 aa).

Lys-308 acts as the Nucleophile in catalysis.

It belongs to the deoxyhypusine synthase family. The cofactor is NAD(+).

The catalysed reaction is [eIF5A protein]-L-lysine + spermidine = [eIF5A protein]-deoxyhypusine + propane-1,3-diamine. The protein operates within protein modification; eIF5A hypusination. Catalyzes the NAD-dependent oxidative cleavage of spermidine and the subsequent transfer of the butylamine moiety of spermidine to the epsilon-amino group of a specific lysine residue of the eIF-5A precursor protein to form the intermediate deoxyhypusine residue. The polypeptide is Probable deoxyhypusine synthase (Thermococcus kodakarensis (strain ATCC BAA-918 / JCM 12380 / KOD1) (Pyrococcus kodakaraensis (strain KOD1))).